Consider the following 231-residue polypeptide: Large ribosomal subunit protein uL1 (231 aa).

This sequence belongs to the universal ribosomal protein uL1 family. Part of the 50S ribosomal subunit.

In terms of biological role, binds directly to 23S rRNA. The L1 stalk is quite mobile in the ribosome, and is involved in E site tRNA release. Functionally, protein L1 is also a translational repressor protein, it controls the translation of the L11 operon by binding to its mRNA. The chain is Large ribosomal subunit protein uL1 from Staphylococcus haemolyticus (strain JCSC1435).